Reading from the N-terminus, the 505-residue chain is Trans-cinnamate 4-monooxygenase C4H2 (505 aa).

Short sequence motifs (nuclear localization signal) lie at residues 161 to 168 (VKKMKESN) and 247 to 254 (EKRLKLFK). C447 is a binding site for heme.

It belongs to the cytochrome P450 family. Heme is required as a cofactor.

It localises to the nucleus. It carries out the reaction (E)-cinnamate + reduced [NADPH--hemoprotein reductase] + O2 = (E)-4-coumarate + oxidized [NADPH--hemoprotein reductase] + H2O + H(+). The protein operates within phenylpropanoid metabolism; trans-4-coumarate biosynthesis; trans-4-coumarate from trans-cinnamate: step 1/1. Component of the floral volatile benzenoid/phenylpropanoid (FVBP) biosynthetic pathway that controls carbon flux to pigments essential for pollination or UV protection, to numerous pytoalexins synthesized by plants when challenged by pathogens, and to lignins. The sequence is that of Trans-cinnamate 4-monooxygenase C4H2 from Petunia hybrida (Petunia).